Consider the following 131-residue polypeptide: Small ribosomal subunit protein eS17 (131 aa).

It belongs to the eukaryotic ribosomal protein eS17 family.

The polypeptide is Small ribosomal subunit protein eS17 (RPS17) (Theileria annulata).